The chain runs to 1409 residues: MSTDTQIIKLVEEILCEKTNDYDYEGPMPDEAELQKRAEDGMKKFATVFAGMSQEVKENALRSCLIHVAGINHRNKVRKHMQVLKDLVGKGIIPARLLCEQIMSSEKLVYQNQSFWIECFQVVRRVIGGVDYKGVREIMKCCKEKALSFPSGISSSILPQMLELTEVIEHIFNRNACLLPAYFIINEIQKADYQDTHWRIANLIANFIEEFVIVAQMLSIIGHSSMLPIVEHSSYADNLINPWKLDPTTLKLALRGNLPYEPELLQPQIKLLRFVLEQPYSRDMVCSMLNLQKTQKQKCMALEEQLVWLVMCAMECSEKEPVHTVDGEISSHTQWVWLHLSSQLIYFVLFQFATFQNIVNTLHDKLAVSNLRRGRDHLMWVLLQYISGSIQRNSITNFLPILKLYDSLYPEKEPLPVPDYNNPLCTHQMAPTCIWIHLLKRAQSEHYNINRSIPTALKLHHEFLQHLVMPNNNATLCMGSDYRLALLCNAYSTNPDYFSRPMAALIETILGNCKNPSAGGGSTSATQPLPTVPLSMSVLDSLTIHSKMSLIHSIVTHMIKQAQSKTTVPNTNNMAPALVETYSRLLVYTEIESLGIKGFLGQLLPQVFKSAAWGILYTLLEMFSYRMHHIQPHYRVQLLSHLHSLASVPHTNQMQLHSCVESTALRLITGLGSVEVQAQMSRYVTEQKAPGNIVSAESEELNRALILTLARSMQITGTGNDPQSTTWCKELLNSIMQNTPHTWSQHTLQCFPPVLNDLVVQHNVPKENKQLLKKSVDEEYRNWTSMSNENDIIGHFGTAGTPGTPPLFLCLLFKMIVETDTISPVAYKILERIGARALSAHLRKLCDYLVFEVSNSGDGAHVNKCVDTINDMIWKYNIITIDRLVLCLSLRTLEGNEAQVSFCIIQLLLLKTSEFRNRLQEFVSINSPEHWKQNNWHERHLAFHQKFPEKFTPDESVSHPSLPVYFGNVCLRFLPVLDITIHRYLEVPAAMSKTLDVLLDHLGPLYKFHDRPITYLYNTLHYYERMLRDRPQLKKRLVGTVIGSLKDVRPDNWAVTEQYQSYMSKKDDAVNWMPDLNYYIYLVRRMQDTIDGTNIFPGTDWRFNEFPNPPAHALYVTCVELLGLPVGPQGVANSLIDVVVKGYPVIPSQSVHNWINTIGLIMAALPESYWGVIYERLREVISCPQMTDWLHRQSPFELFNFKIVREAMLEKNYVVILAIAQSILHHSGIGQISTVTEHIKENFKPIIKTEYQLIYLCHLVGPFLNRLCAERSRAVSDITLILYELLEQVDKAQPSLALKYMDPICDLLYHIKYMFIGDMMKSDLEAIIRRLRPALQMRLRFITRLNVDEIGVDQQNVDASAAGQGPAQGGPQSQQPQTTGQAGGQPSVPQQQQQTQQQQPQQQQQVQQQ.

The tract at residues 1359 to 1409 (ASAAGQGPAQGGPQSQQPQTTGQAGGQPSVPQQQQQTQQQQPQQQQQVQQQ) is disordered.

It belongs to the Mediator complex subunit 23 family. In terms of assembly, component of the Mediator complex.

Its subcellular location is the nucleus. Component of the Mediator complex, a coactivator involved in the regulated transcription of nearly all RNA polymerase II-dependent genes. Mediator functions as a bridge to convey information from gene-specific regulatory proteins to the basal RNA polymerase II transcription machinery. Mediator is recruited to promoters by direct interactions with regulatory proteins and serves as a scaffold for the assembly of a functional preinitiation complex with RNA polymerase II and the general transcription factors. This chain is Mediator of RNA polymerase II transcription subunit 23 (MED23), found in Aedes aegypti (Yellowfever mosquito).